A 121-amino-acid chain; its full sequence is Ribosome-binding factor A (121 aa).

This sequence belongs to the RbfA family. Monomer. Binds 30S ribosomal subunits, but not 50S ribosomal subunits or 70S ribosomes.

The protein resides in the cytoplasm. Functionally, one of several proteins that assist in the late maturation steps of the functional core of the 30S ribosomal subunit. Associates with free 30S ribosomal subunits (but not with 30S subunits that are part of 70S ribosomes or polysomes). Required for efficient processing of 16S rRNA. May interact with the 5'-terminal helix region of 16S rRNA. The chain is Ribosome-binding factor A from Oenococcus oeni (strain ATCC BAA-331 / PSU-1).